A 298-amino-acid chain; its full sequence is Mitochondrial 2-oxodicarboxylate carrier (298 aa).

Solcar repeat units lie at residues 10 to 99 (HETS…YKKF), 106 to 195 (SPGL…VKNI), and 204 to 293 (LEFL…TYAW). Transmembrane regions (helical) follow at residues 16–36 (VAAG…LDVV), 69–88 (FGFY…KRAV), 112–132 (LIAG…FEVV), 166–186 (GLNK…MVYF), 204–224 (LEFL…SVFN), and 276–296 (LGPG…WLQE).

The protein belongs to the mitochondrial carrier (TC 2.A.29) family.

The protein localises to the mitochondrion inner membrane. The enzyme catalyses 2-oxoadipate(in) + 2-oxoglutarate(out) = 2-oxoadipate(out) + 2-oxoglutarate(in). The catalysed reaction is hexanedioate(in) + 2-oxoglutarate(out) = hexanedioate(out) + 2-oxoglutarate(in). It catalyses the reaction L-2-aminoadipate(in) + 2-oxoglutarate(out) = L-2-aminoadipate(out) + 2-oxoglutarate(in). It carries out the reaction glutarate(in) + 2-oxoglutarate(out) = glutarate(out) + 2-oxoglutarate(in). The enzyme catalyses 2-oxoheptanedioate(in) + 2-oxoglutarate(out) = 2-oxoheptanedioate(out) + 2-oxoglutarate(in). The catalysed reaction is heptanedioate(in) + 2-oxoglutarate(out) = heptanedioate(out) + 2-oxoglutarate(in). It catalyses the reaction citrate(in) + 2-oxoglutarate(out) = citrate(out) + 2-oxoglutarate(in). In terms of biological role, transports dicarboxylates across the inner membranes of mitochondria by a counter-exchange mechanism. Can transport 2-oxoadipate (2-oxohexanedioate), 2-oxoglutarate, adipate (hexanedioate), glutarate, and to a lesser extent, pimelate (heptanedioate), 2-oxopimelate (2-oxoheptanedioate), 2-aminoadipate (2-aminohexanedioate), oxaloacetate, and citrate. Plays a central role in catabolism of lysine, hydroxylysine, and tryptophan, by transporting common metabolite intermediates (such as 2-oxoadipate) into the mitochondria, where it is converted into acetyl-CoA and can enter the citric acid (TCA) cycle. The polypeptide is Mitochondrial 2-oxodicarboxylate carrier (Slc25a21) (Mus musculus (Mouse)).